The following is a 64-amino-acid chain: Defensin beta 4A (64 aa).

An N-terminal signal peptide occupies residues 1-23 (MRVLYLLFSFLFIFLMPLPGVFG). 3 disulfide bridges follow: C31–C60, C38–C53, and C43–C61. Residues 33–48 (KSGAICHPVFCPRRYK) form a phosphatidylinositol 4,5-bisphosphate (PIP2) binding region.

Belongs to the beta-defensin family. LAP/TAP subfamily. Monomer. Homodimer. In terms of tissue distribution, expressed in lung epithelial cells (at protein level). Expressed in foreskin, lung and trachea. Lower expression in kidney, uterus and salivary gland tissue. Expressed in epithelial cells of the respiratory tract, with higher expression in distal parenchyma of the lung, trachea, and tonsils, and lower expression in pharynx and adenoid, and low expression in tongue and larynx.

It is found in the secreted. Functionally, exhibits antimicrobial activity against Gram-negative bacteria and Gram-positive bacteria, with highest activity against Gram-negative bacteria. Antimicrobial activity against P.aruginosa seems to be salt-sensitive and is reduced with high salt concentrations greater than 25 mM. Also exhibits antimicrobial activity against the yeast C.albicans. Permeabilizes C.albicans cell membranes via targeting plasma membrane lipid phosphatidylinositol 4,5-bisphosphate (PIP2), thereby leading to cell fragmentation and cell death. Acts as a ligand for C-C chemokine receptor CCR6. Binds to CCR6 and induces chemotactic activity of CCR6-expressing cells, such as immature dendritic cells and memory T cells. The chain is Defensin beta 4A (DEFB4A) from Homo sapiens (Human).